The sequence spans 331 residues: Cathepsin S (331 aa).

A signal peptide spans 1–16 (MKRLVCVLLVCSSAVA). Residues 17–114 (QLHKDPTLDH…ITYKSNPNRI (98 aa)) constitute a propeptide, activation peptide. Asn-104 carries N-linked (GlcNAc...) asparagine glycosylation. 4 disulfide bridges follow: Cys-126/Cys-224, Cys-136/Cys-180, Cys-170/Cys-213, and Cys-272/Cys-320. The active site involves Cys-139. Catalysis depends on residues His-278 and Asn-298.

This sequence belongs to the peptidase C1 family. Monomer.

The protein localises to the lysosome. It localises to the secreted. Its subcellular location is the cytoplasmic vesicle. The protein resides in the phagosome. The enzyme catalyses Similar to cathepsin L, but with much less activity on Z-Phe-Arg-|-NHMec, and more activity on the Z-Val-Val-Arg-|-Xaa compound.. In terms of biological role, thiol protease. Key protease responsible for the removal of the invariant chain from MHC class II molecules and MHC class II antigen presentation. The bond-specificity of this proteinase is in part similar to the specificities of cathepsin L. The sequence is that of Cathepsin S (CTSS) from Homo sapiens (Human).